The following is a 113-amino-acid chain: U11-theraphotoxin-Hhn1u (113 aa).

The first 21 residues, 1 to 21, serve as a signal peptide directing secretion; the sequence is MNTVRVTFLLVFVLAVSLGQA. A propeptide spanning residues 22–74 is cleaved from the precursor; the sequence is DKDENRMEMQEKTEQGKSYLDFAENLLLQKLEELEAKLLEEDSEESRNSRQKR. 3 cysteine pairs are disulfide-bonded: Cys-75–Cys-90, Cys-82–Cys-95, and Cys-89–Cys-110.

Belongs to the neurotoxin 14 (magi-1) family. 01 (HNTX-16) subfamily. Expressed by the venom gland.

The protein resides in the secreted. In terms of biological role, probable ion channel inhibitor. This chain is U11-theraphotoxin-Hhn1u, found in Cyriopagopus hainanus (Chinese bird spider).